The primary structure comprises 100 residues: MIREERLLKVLRAPHVSEKASTAMEKSNTIVLKVAKDATKAEIKAAVQKLFEVEVEVVNTLVVKGKVKRHGQRIGRRSDWKKAYVTLKEGQNLDFVGGAE.

Belongs to the universal ribosomal protein uL23 family. Part of the 50S ribosomal subunit. Contacts protein L29, and trigger factor when it is bound to the ribosome.

One of the early assembly proteins it binds 23S rRNA. One of the proteins that surrounds the polypeptide exit tunnel on the outside of the ribosome. Forms the main docking site for trigger factor binding to the ribosome. The sequence is that of Large ribosomal subunit protein uL23 from Escherichia coli O157:H7.